A 482-amino-acid polypeptide reads, in one-letter code: Catalase (482 aa).

Active-site residues include His-53 and Asn-126. Position 336 (Tyr-336) interacts with heme.

Belongs to the catalase family. Requires heme as cofactor.

Its subcellular location is the periplasm. The catalysed reaction is 2 H2O2 = O2 + 2 H2O. Its function is as follows. Decomposes hydrogen peroxide into water and oxygen; serves to protect cells from the toxic effects of hydrogen peroxide. Could protect cells in nodules which have a high potential to produce hydrogen peroxide because of the strong reducing conditions required for nitrogen fixation and the action of several proteins. The sequence is that of Catalase (katA) from Aliivibrio fischeri (strain ATCC 700601 / ES114) (Vibrio fischeri).